A 390-amino-acid chain; its full sequence is 1-deoxy-D-xylulose 5-phosphate reductoisomerase (390 aa).

NADPH is bound by residues Thr10, Gly11, Ser12, Val13, Gly38, Asn40, and Asn123. Lys124 contacts 1-deoxy-D-xylulose 5-phosphate. Residue Glu125 participates in NADPH binding. Asp149 contacts Mn(2+). The 1-deoxy-D-xylulose 5-phosphate site is built by Ser150, Glu151, Ser175, and His198. Glu151 provides a ligand contact to Mn(2+). An NADPH-binding site is contributed by Gly204. 1-deoxy-D-xylulose 5-phosphate contacts are provided by Ser211, Asn216, Lys217, and Glu220. Residue Glu220 coordinates Mn(2+).

It belongs to the DXR family. It depends on Mg(2+) as a cofactor. Requires Mn(2+) as cofactor.

The enzyme catalyses 2-C-methyl-D-erythritol 4-phosphate + NADP(+) = 1-deoxy-D-xylulose 5-phosphate + NADPH + H(+). It functions in the pathway isoprenoid biosynthesis; isopentenyl diphosphate biosynthesis via DXP pathway; isopentenyl diphosphate from 1-deoxy-D-xylulose 5-phosphate: step 1/6. Functionally, catalyzes the NADPH-dependent rearrangement and reduction of 1-deoxy-D-xylulose-5-phosphate (DXP) to 2-C-methyl-D-erythritol 4-phosphate (MEP). The polypeptide is 1-deoxy-D-xylulose 5-phosphate reductoisomerase (Paracoccus denitrificans (strain Pd 1222)).